Consider the following 297-residue polypeptide: SWIRM domain-containing protein laf1 (297 aa).

Disordered stretches follow at residues 50–70 (PKCS…KPTA) and 109–173 (STPA…EFSS). A compositionally biased stretch (polar residues) spans 159–173 (QHNTRFKQSSREFSS). Residues 207-297 (LRSEWKGPPL…AFHDEGFFDD (91 aa)) enclose the SWIRM domain.

In terms of assembly, component of the RPD3C(L) complex.

The protein localises to the nucleus. Functionally, component of the RPD3C(L) histone deacetylase complex (HDAC) responsible for the deacetylation of lysine residues on the N-terminal part of the core histones (H2A, H2B, H3 and H4). Histone deacetylation gives a tag for epigenetic repression and plays an important role in transcriptional regulation, cell cycle progression and developmental events. The polypeptide is SWIRM domain-containing protein laf1 (laf1) (Schizosaccharomyces pombe (strain 972 / ATCC 24843) (Fission yeast)).